A 641-amino-acid chain; its full sequence is Sodium-dependent nutrient amino acid transporter 1 (641 aa).

The segment at 1–38 is disordered; that stretch reads MELKGVQPSNGSSNGSGNGATNAASTEKTDAEKPTAER. Over 1-40 the chain is Cytoplasmic; that stretch reads MELKGVQPSNGSSNGSGNGATNAASTEKTDAEKPTAERTN. Low complexity predominate over residues 9-26; that stretch reads SNGSSNGSGNGATNAAST. Basic and acidic residues predominate over residues 27 to 36; it reads EKTDAEKPTA. Helical transmembrane passes span 41 to 61, 74 to 94, and 111 to 131; these read WGNG…LGNV, GAFL…MYYL, and SVVP…ICII. Residues N185 and N190 are each glycosylated (N-linked (GlcNAc...) asparagine). Helical transmembrane passes span 229–249, 258–278, 307–327, 341–361, 401–421, 447–467, 474–494, 516–536, and 552–572; these read PDWK…LVIM, AAYF…IRAV, AVVQ…MFAS, IVTT…FAIL, LFSV…IVAL, VCGF…ILTL, TYVV…VYGL, CWSF…MVTI, and IAGW…GLWY.

This sequence belongs to the sodium:neurotransmitter symporter (SNF) (TC 2.A.22) family. In larvae, weak specific expression in the anterior midgut just proximal to the gastric caeca reproductive rudiments, common ureters of the Malpighian tubules, and distal swollen portion of the anterior pair of Malpighian tubules. Expression is also seen in the imaginal disks of the head; brain hemispheres and the ventral ganglion. Stronger expression in the posterior midgut.

It localises to the membrane. In terms of biological role, unusual broad substrate spectrum amino acid:sodium cotransporter that promotes absorption of the D isomers of essential amino acids. Neutral amino acids are the preferred substrates, especially methionine and phenylalanine. The protein is Sodium-dependent nutrient amino acid transporter 1 (NAAT1) of Drosophila melanogaster (Fruit fly).